The chain runs to 257 residues: High-affinity copper transporter ctrC (257 aa).

Helical transmembrane passes span 79 to 99 (RGMF…LEFL) and 202 to 222 (YFNG…SFIF).

The protein belongs to the copper transporter (Ctr) (TC 1.A.56) family. SLC31A subfamily.

It is found in the cell membrane. It catalyses the reaction Cu(2+)(in) = Cu(2+)(out). Its function is as follows. High-affinity copper transporter of plasma membrane that mediates copper uptake under low copper conditions. The mechanism driving the transmembrane transport of copper has still to be determined. Acts as a potential virulence factor. The protein is High-affinity copper transporter ctrC of Aspergillus fumigatus (strain ATCC MYA-4609 / CBS 101355 / FGSC A1100 / Af293) (Neosartorya fumigata).